The chain runs to 368 residues: MLSAARLQFAQGSVRRLTVSARDAPTKISTLAVKVHGGSRYATKDGVAHLLNRFNFQNTNTRSALKLVRESELLGGTFKSTLDREYITLKATFLKDDLPYYVNALADVLYKTAFKPHELTESVLPAARYDYAVAEQCPVKSAEDQLYAITFRKGLGNPLLYDGVERVSLQDIKDFADKVYTKENLEVSGENVVEADLKRFVDESLLSTLPAGKSLVSKSEPKFFLGEENRVRFIGDSVAAIGIPVNKASLAQYEVLANYLTSALSELSGLISSAKLDKFTDGGLFTLFVRDQDSAVVSSNIKKIVADLKKGKDLSPAINYTKLKNAVQNESVSSPIELNFDAVKDFKLGKFNYVAVGDVSNLPYLDEL.

Residues 1–16 constitute a mitochondrion transit peptide; that stretch reads MLSAARLQFAQGSVRR. A phosphoserine mark is found at Ser141 and Ser168.

Belongs to the peptidase M16 family. UQCRC2/QCR2 subfamily. Component of the ubiquinol-cytochrome c oxidoreductase (cytochrome b-c1 complex, complex III, CIII), a multisubunit enzyme composed of 10 subunits. The complex is composed of 3 respiratory subunits cytochrome b (COB), cytochrome c1 (CYT1) and Rieske protein (RIP1), 2 core protein subunits COR1 and QCR2, and 5 low-molecular weight protein subunits QCR6, QCR7, QCR8, QCR9 and QCR10. The complex exists as an obligatory dimer and forms supercomplexes (SCs) in the inner mitochondrial membrane with a monomer or a dimer of cytochrome c oxidase (complex IV, CIV), resulting in 2 different assemblies (supercomplexes III(2)IV and III(2)IV(2)).

The protein localises to the mitochondrion inner membrane. Its function is as follows. Component of the ubiquinol-cytochrome c oxidoreductase, a multisubunit transmembrane complex that is part of the mitochondrial electron transport chain which drives oxidative phosphorylation. The respiratory chain contains 3 multisubunit complexes succinate dehydrogenase (complex II, CII), ubiquinol-cytochrome c oxidoreductase (cytochrome b-c1 complex, complex III, CIII) and cytochrome c oxidase (complex IV, CIV), that cooperate to transfer electrons derived from NADH and succinate to molecular oxygen, creating an electrochemical gradient over the inner membrane that drives transmembrane transport and the ATP synthase. The cytochrome b-c1 complex catalyzes electron transfer from ubiquinol to cytochrome c, linking this redox reaction to translocation of protons across the mitochondrial inner membrane, with protons being carried across the membrane as hydrogens on the quinol. In the process called Q cycle, 2 protons are consumed from the matrix, 4 protons are released into the intermembrane space and 2 electrons are passed to cytochrome c. This is Cytochrome b-c1 complex subunit 2, mitochondrial (QCR2) from Saccharomyces cerevisiae (strain ATCC 204508 / S288c) (Baker's yeast).